Consider the following 226-residue polypeptide: Large ribosomal subunit protein uL3 (226 aa).

The segment at 135-158 (MSSQRASHGNSRSHNVPGSIGMAQ) is disordered. Over residues 137 to 150 (SQRASHGNSRSHNV) the composition is skewed to polar residues. Glutamine 158 carries the post-translational modification N5-methylglutamine.

The protein belongs to the universal ribosomal protein uL3 family. Part of the 50S ribosomal subunit. Forms a cluster with proteins L14 and L19. In terms of processing, methylated by PrmB.

Its function is as follows. One of the primary rRNA binding proteins, it binds directly near the 3'-end of the 23S rRNA, where it nucleates assembly of the 50S subunit. In Polaromonas naphthalenivorans (strain CJ2), this protein is Large ribosomal subunit protein uL3.